Here is a 360-residue protein sequence, read N- to C-terminus: Heat-inducible transcription repressor HrcA (360 aa).

Belongs to the HrcA family.

Functionally, negative regulator of class I heat shock genes (grpE-dnaK-dnaJ and groELS operons). Prevents heat-shock induction of these operons. In Streptococcus thermophilus (strain CNRZ 1066), this protein is Heat-inducible transcription repressor HrcA.